Reading from the N-terminus, the 622-residue chain is Polypeptide N-acetylgalactosaminyltransferase 6 (622 aa).

Over 1-8 (MRLLRRRH) the chain is Cytoplasmic. The helical; Signal-anchor for type II membrane protein transmembrane segment at 9–28 (MPLRLAMVGCAFVLFLFLLH) threads the bilayer. At 29–622 (RDVSSREEAT…SDPHQLWLFV (594 aa)) the chain is on the lumenal side. An N-linked (GlcNAc...) asparagine glycan is attached at Asn86. Disulfide bonds link Cys165–Cys402 and Cys393–Cys474. Residues 176–285 (LATTSVIIVF…HGWLEPLLAR (110 aa)) form a catalytic subdomain A region. Mn(2+) contacts are provided by Asp269, His271, and His407. The segment at 348-410 (PIKSPTFAGG…PCSVVGHVFR (63 aa)) is catalytic subdomain B. N-linked (GlcNAc...) asparagine glycosylation is present at Asn476. Residues 506-622 (TNQCLDVGEN…SDPHQLWLFV (117 aa)) enclose the Ricin B-type lectin domain. Cys509 and Cys527 are joined by a disulfide. Residues Asp511, Glu514, His528, and Asn533 each contribute to the UDP-N-acetyl-alpha-D-galactosamine site. 2 cysteine pairs are disulfide-bonded: Cys553–Cys566 and Cys597–Cys610.

It belongs to the glycosyltransferase 2 family. GalNAc-T subfamily. Mn(2+) serves as cofactor. Expressed in placenta and trachea. Weakly expressed in brain and pancreas. Expressed in fibroblast. Weakly or not expressed in lung, liver, muscle, kidney, spleen, thymus, prostate, testis, ovary, intestine, colon, leukocyte, stomach, thyroid, spinal cord, lymph node, trachea, adrenal gland and bone marrow.

The protein resides in the golgi apparatus membrane. It catalyses the reaction L-seryl-[protein] + UDP-N-acetyl-alpha-D-galactosamine = a 3-O-[N-acetyl-alpha-D-galactosaminyl]-L-seryl-[protein] + UDP + H(+). The enzyme catalyses L-threonyl-[protein] + UDP-N-acetyl-alpha-D-galactosamine = a 3-O-[N-acetyl-alpha-D-galactosaminyl]-L-threonyl-[protein] + UDP + H(+). It participates in protein modification; protein glycosylation. Catalyzes the initial reaction in O-linked oligosaccharide biosynthesis, the transfer of an N-acetyl-D-galactosamine residue to a serine or threonine residue on the protein receptor. May participate in synthesis of oncofetal fibronectin. Has activity toward MUC1A, MUC2, EA2 and fibronectin peptides. Glycosylates FGF23. This Homo sapiens (Human) protein is Polypeptide N-acetylgalactosaminyltransferase 6 (GALNT6).